We begin with the raw amino-acid sequence, 296 residues long: Mycothiol acetyltransferase (296 aa).

N-acetyltransferase domains lie at 17–146 and 156–296; these read YNHR…AVYD and LKTA…VYEK. Glutamate 44 is a binding site for 1D-myo-inositol 2-(L-cysteinylamino)-2-deoxy-alpha-D-glucopyranoside. 81–83 provides a ligand contact to acetyl-CoA; it reads LAV. 3 residues coordinate 1D-myo-inositol 2-(L-cysteinylamino)-2-deoxy-alpha-D-glucopyranoside: glutamate 183, lysine 222, and glutamate 230. Residues 234–236 and 241–247 contribute to the acetyl-CoA site; these read VGL and RGKGLGD. Residue tyrosine 268 coordinates 1D-myo-inositol 2-(L-cysteinylamino)-2-deoxy-alpha-D-glucopyranoside.

This sequence belongs to the acetyltransferase family. MshD subfamily. In terms of assembly, monomer.

The enzyme catalyses 1D-myo-inositol 2-(L-cysteinylamino)-2-deoxy-alpha-D-glucopyranoside + acetyl-CoA = mycothiol + CoA + H(+). Functionally, catalyzes the transfer of acetyl from acetyl-CoA to desacetylmycothiol (Cys-GlcN-Ins) to form mycothiol. This chain is Mycothiol acetyltransferase, found in Corynebacterium efficiens (strain DSM 44549 / YS-314 / AJ 12310 / JCM 11189 / NBRC 100395).